Consider the following 423-residue polypeptide: Diaminobutyrate--2-oxoglutarate transaminase (423 aa).

The residue at position 271 (lysine 271) is an N6-(pyridoxal phosphate)lysine.

This sequence belongs to the class-III pyridoxal-phosphate-dependent aminotransferase family. It depends on pyridoxal 5'-phosphate as a cofactor.

It carries out the reaction L-2,4-diaminobutanoate + 2-oxoglutarate = L-aspartate 4-semialdehyde + L-glutamate. Its pathway is amine and polyamine biosynthesis; ectoine biosynthesis; L-ectoine from L-aspartate 4-semialdehyde: step 1/3. Catalyzes reversively the conversion of L-aspartate beta-semialdehyde (ASA) to L-2,4-diaminobutyrate (DABA) by transamination with L-glutamate. The polypeptide is Diaminobutyrate--2-oxoglutarate transaminase (ectB) (Streptomyces coelicolor (strain ATCC BAA-471 / A3(2) / M145)).